The chain runs to 258 residues: Proteasome subunit alpha (258 aa).

Belongs to the peptidase T1A family. The 20S proteasome core is composed of 14 alpha and 14 beta subunits that assemble into four stacked heptameric rings, resulting in a barrel-shaped structure. The two inner rings, each composed of seven catalytic beta subunits, are sandwiched by two outer rings, each composed of seven alpha subunits. The catalytic chamber with the active sites is on the inside of the barrel. Has a gated structure, the ends of the cylinder being occluded by the N-termini of the alpha-subunits. Is capped at one or both ends by the proteasome regulatory ATPase, PAN.

The protein localises to the cytoplasm. Its activity is regulated as follows. The formation of the proteasomal ATPase PAN-20S proteasome complex, via the docking of the C-termini of PAN into the intersubunit pockets in the alpha-rings, triggers opening of the gate for substrate entry. Interconversion between the open-gate and close-gate conformations leads to a dynamic regulation of the 20S proteasome proteolysis activity. In terms of biological role, component of the proteasome core, a large protease complex with broad specificity involved in protein degradation. This is Proteasome subunit alpha from Aeropyrum pernix (strain ATCC 700893 / DSM 11879 / JCM 9820 / NBRC 100138 / K1).